Consider the following 161-residue polypeptide: Regulator of ribonuclease activity A (161 aa).

This sequence belongs to the RraA family. As to quaternary structure, homotrimer. Binds to both RNA-binding sites in the C-terminal region of Rne and to RhlB.

It localises to the cytoplasm. Functionally, globally modulates RNA abundance by binding to RNase E (Rne) and regulating its endonucleolytic activity. Can modulate Rne action in a substrate-dependent manner by altering the composition of the degradosome. Modulates RNA-binding and helicase activities of the degradosome. The sequence is that of Regulator of ribonuclease activity A from Photobacterium profundum (strain SS9).